The chain runs to 805 residues: MKRAGTLRLLSDLSNFTGAARLRELLAGDPAVLVRCSPDGRHLLLLRPPGSPAPQLLVAVRGPGLPLERAWPEGDPSPLDVFFVPWLARPALILVWESGLAEVWGVGMEPGWKLLQSTELCPDGGARVMAVAATRGRLVWCEERQPGVKDQPEQLSTAFSHRVCFKTLETSGEAGTKLGCTHILLHHCPLFGLIASRKDLFLVPTTNTWSGVAHLLLIWSPSKGKVIVAAPSLGLSHSKSLNPKQGDTWDFRTLLRGLPGFLSPREPLAVHTWAPSSQGLLLLDLKGKVSLVQCHGGTRTVGILQEAPVSLKGSAALGTFHGTLACVLGSTLELLDMSSGRLLEKKVLSTDRVHLLEPPAPGMKNEEELETRGALRLLSALGLFCVCWETPQGLELPSDKDLVFEEACGYYQRRSLRGTQLTPEELRHNSMFRAPQALASILQGHLPPSTLLTTLRAELRDYRSIEQLKAQLVAGDDEEAGWTELAEHEVARLLRTQLTGDQLAQFNTIFQALPTAAWGATLQALQLQPDRSGRLRSQAPPDVWKKVLRAPTAGKEHPNGILPPFELLCQCLGQLEPQWLPPFVKLAQQQGGPGWGAEGPSLPLYRRALAVLGEEGKRPEALELELLLGSGRPKAVLQAVRQLIKKEEWERALEAGLALDASSPLLRSEIFKLLLAEFAQHRRLDAHLPLLCRLCPPEVAPHELLLLLRTHLPDDEGTTPFPEPGAEPPLTVGLVRALLEQTGAQGRPSGPVQSTYEDILWDPGTPPPTPPRGPTASLPASDHPGQEAWVPPGQGLGAADVGVHL.

Residues 743–805 (GAQGRPSGPV…LGAADVGVHL (63 aa)) form a disordered region. A compositionally biased stretch (pro residues) spans 764 to 773 (GTPPPTPPRG).

Component of the biogenesis of lysosome-related organelles complex-2 (or BLOC2) composed of HPS3, HPS5 and HPS6. Interacts with HPS5 and HPS3. Interacts with biogenesis of lysosome-related organelles complex-1 (BLOC1). Interacts with dynein intermediate chain. Interacts with AP-3 complex. Interacts with DCTN1. Widely expressed, with lowest expression in skeletal muscle.

The protein resides in the microsome membrane. Its subcellular location is the cytoplasm. It localises to the cytosol. The protein localises to the early endosome membrane. It is found in the lysosome membrane. In terms of biological role, may regulate the synthesis and function of lysosomes and of highly specialized organelles, such as melanosomes and platelet dense granules. Acts as a cargo adapter for the dynein-dynactin motor complex to mediate the transport of lysosomes from the cell periphery to the perinuclear region. Facilitates retrograde lysosomal trafficking by linking the motor complex to lysosomes, and perinuclear positioning of lysosomes is crucial for the delivery of endocytic cargos to lysosomes, for lysosome maturation and functioning. This chain is BLOC-2 complex member HPS6 (Hps6), found in Mus musculus (Mouse).